We begin with the raw amino-acid sequence, 156 residues long: Endoribonuclease YbeY (156 aa).

His122, His126, and His132 together coordinate Zn(2+).

The protein belongs to the endoribonuclease YbeY family. The cofactor is Zn(2+).

Its subcellular location is the cytoplasm. Its function is as follows. Single strand-specific metallo-endoribonuclease involved in late-stage 70S ribosome quality control and in maturation of the 3' terminus of the 16S rRNA. The polypeptide is Endoribonuclease YbeY (Bacillus cereus (strain G9842)).